The following is a 213-amino-acid chain: Protein DMP4 (213 aa).

A run of 4 helical transmembrane segments spans residues 51 to 71 (LANL…PIFS), 78 to 98 (LVSK…CFIL), 142 to 162 (FIDF…VLFD), and 180 to 200 (VLTA…ATFP).

This sequence belongs to the plant DMP1 protein family. In terms of tissue distribution, expressed in leaves, flowers and siliques, especially in vascular tissues.

It localises to the vacuole membrane. Its function is as follows. Involved in membrane remodeling. The polypeptide is Protein DMP4 (Arabidopsis thaliana (Mouse-ear cress)).